The chain runs to 1482 residues: Chromosome partition protein MukB (1482 aa).

An ATP-binding site is contributed by 34–41 (GGNGAGKS). 6 coiled-coil regions span residues 337–468 (LNLV…LSVA), 509–604 (QHLA…APIW), 780–805 (RAAR…ATLS), 835–1044 (EAEI…ELVD), 1070–1115 (TNRA…TAKA), and 1210–1265 (EAIE…LQAV). A flexible hinge region spans residues 666-783 (PGGAEDQRLV…AVPLFGRAAR (118 aa)).

The protein belongs to the SMC family. MukB subfamily. As to quaternary structure, homodimerization via its hinge domain. Binds to DNA via its C-terminal region. Interacts, and probably forms a ternary complex, with MukE and MukF via its C-terminal region. The complex formation is stimulated by calcium or magnesium. Interacts with tubulin-related protein FtsZ.

It is found in the cytoplasm. It localises to the nucleoid. Its function is as follows. Plays a central role in chromosome condensation, segregation and cell cycle progression. Functions as a homodimer, which is essential for chromosome partition. Involved in negative DNA supercoiling in vivo, and by this means organize and compact chromosomes. May achieve or facilitate chromosome segregation by condensation DNA from both sides of a centrally located replisome during cell division. The sequence is that of Chromosome partition protein MukB from Serratia proteamaculans (strain 568).